The following is a 486-amino-acid chain: Cytochrome P450 monooxygenase 1 (486 aa).

The first 21 residues, 1–21, serve as a signal peptide directing secretion; that stretch reads MSHFLPTLILTSLTLVAYVLA. Asparagine 346 carries N-linked (GlcNAc...) asparagine glycosylation. Heme is bound at residue cysteine 430. An N-linked (GlcNAc...) asparagine glycan is attached at asparagine 434.

This sequence belongs to the cytochrome P450 family. It depends on heme as a cofactor.

The protein operates within mycotoxin biosynthesis. In terms of biological role, cytochrome P450 monooxygenase; part of the gene cluster that mediates the biosynthesis of aphidicolin, a specific inhibitor of eukaryotic DNA synthesis and DNA polymerase alpha. The geranylgeranyl pyrophosphate synthase GGS is required for supplying a sufficient amount of geranylgeranyl diphosphate (GGDP), the general precursor of diterpenes. The diterpene synthase ACS then catalyzes the conversion of geranylgeranyl diphosphate to aphidicolan-16-beta-ol via the intermediate syn-copalyldiphosphate (syn-CDP). In addition to aphidicolan-16-beta-ol, the enzyme also produces low levels of amphidicol-15-ene and amphidicol-16-ene. The cytochrome P450 monooxygenase P450-2 then catalyzes the two-step hydroxylation from aphidicolan-16-beta-ol to 3-deoxyaphidicolin via a 17,3-deoxyaphidicolin intermediate. Finally, the cytochrome P450 monooxygenase P450-1 converts 3-deoxyaphidicolin to aphidicolin. The polypeptide is Cytochrome P450 monooxygenase 1 (PbP450-1) (Neocamarosporium betae (Beet black rot fungus)).